A 976-amino-acid chain; its full sequence is Apical junction component 1 homolog (976 aa).

Residues 21-49 (ATPGPASKCSPCERSVARPAEPAPFNKRH) are disordered. The residue at position 52 (serine 52) is a Phosphoserine. Disordered regions lie at residues 61-136 (GPAM…EPAY), 220-242 (PQFH…PTPS), and 264-294 (YAER…RGSF). A compositionally biased stretch (pro residues) spans 98–113 (RAPPGLTPAPASPPVL). Positions 116 to 134 (RGREAQRAARAEASPRREP) are enriched in basic and acidic residues. Position 129 is a phosphoserine (serine 129). The residue at position 322 (arginine 322) is an Omega-N-methylarginine. The interval 412–443 (LQVVPPSDPDPLLASWHGGTGTSPPRLATDSR) is disordered. Serine 468, serine 509, and serine 512 each carry phosphoserine. Disordered stretches follow at residues 539–574 (DLRA…SGRQ) and 614–660 (LDSR…ADED). 2 stretches are compositionally biased toward low complexity: residues 616-625 (SRPAGSGAPA) and 633-655 (PASA…SPEP). Position 749 is an asymmetric dimethylarginine; alternate (arginine 749). Arginine 749 is modified (omega-N-methylarginine; alternate). A disordered region spans residues 855 to 888 (GSPARPPPARSREPDMETLILTPPPGTAGLDQDG).

Its subcellular location is the apical cell membrane. The protein resides in the cell projection. The protein localises to the cilium. It is found in the cell junction. It localises to the adherens junction. May be involved in the control of adherens junction integrity. This chain is Apical junction component 1 homolog, found in Homo sapiens (Human).